Consider the following 174-residue polypeptide: Ribosome maturation factor RimP (174 aa).

This sequence belongs to the RimP family.

The protein localises to the cytoplasm. Functionally, required for maturation of 30S ribosomal subunits. In Bdellovibrio bacteriovorus (strain ATCC 15356 / DSM 50701 / NCIMB 9529 / HD100), this protein is Ribosome maturation factor RimP.